The chain runs to 138 residues: Enhancer of split malpha protein (138 aa).

Belongs to the M4-like protein family.

Functionally, part of the Notch signaling pathway. The protein is Enhancer of split malpha protein of Drosophila melanogaster (Fruit fly).